Reading from the N-terminus, the 488-residue chain is Glutamyl-tRNA(Gln) amidotransferase subunit A (488 aa).

Catalysis depends on charge relay system residues lysine 77 and serine 152. The Acyl-ester intermediate role is filled by serine 176.

Belongs to the amidase family. GatA subfamily. Heterotrimer of A, B and C subunits.

It catalyses the reaction L-glutamyl-tRNA(Gln) + L-glutamine + ATP + H2O = L-glutaminyl-tRNA(Gln) + L-glutamate + ADP + phosphate + H(+). Functionally, allows the formation of correctly charged Gln-tRNA(Gln) through the transamidation of misacylated Glu-tRNA(Gln) in organisms which lack glutaminyl-tRNA synthetase. The reaction takes place in the presence of glutamine and ATP through an activated gamma-phospho-Glu-tRNA(Gln). The chain is Glutamyl-tRNA(Gln) amidotransferase subunit A from Latilactobacillus sakei subsp. sakei (strain 23K) (Lactobacillus sakei subsp. sakei).